We begin with the raw amino-acid sequence, 121 residues long: Cytochrome c2 iso-2 (121 aa).

C15, C18, H19, and M98 together coordinate heme c.

The protein belongs to the cytochrome c family. Binds 1 heme c group covalently per subunit.

In terms of biological role, cytochrome c2 is found mainly in purple, non-sulfur, photosynthetic bacteria where it functions as the electron donor to the oxidized bacteriochlorophyll in the photophosphorylation pathway. However, it may also have a role in the respiratory chain and is found in some non-photosynthetic bacteria. This chain is Cytochrome c2 iso-2, found in Rhodospirillum centenum (Rhodocista centenaria).